We begin with the raw amino-acid sequence, 203 residues long: Adenylyl-sulfate kinase (203 aa).

35 to 42 (GLSGSGKS) provides a ligand contact to ATP. Catalysis depends on serine 109, which acts as the Phosphoserine intermediate.

This sequence belongs to the APS kinase family.

The enzyme catalyses adenosine 5'-phosphosulfate + ATP = 3'-phosphoadenylyl sulfate + ADP + H(+). It functions in the pathway sulfur metabolism; hydrogen sulfide biosynthesis; sulfite from sulfate: step 2/3. Functionally, catalyzes the synthesis of activated sulfate. This is Adenylyl-sulfate kinase from Geotalea daltonii (strain DSM 22248 / JCM 15807 / FRC-32) (Geobacter daltonii).